An 840-amino-acid polypeptide reads, in one-letter code: Radial spoke head 10 homolog B (840 aa).

2 stretches are compositionally biased toward basic and acidic residues: residues 1-16 and 51-63; these read MVKE…DKSA and QPKD…EVKS. Residues 1–74 are disordered; the sequence is MVKEKKKADK…SLPNEDTTQY (74 aa). MORN repeat units follow at residues 86-108, 109-131, 132-154, 155-177, 179-201, 204-226, 227-249, 251-273, 284-306, and 307-329; these read SYEG…QGGC, TYQG…ADGL, KYEG…PDGS, TYEG…STQP, SYIG…NQEG, WYEG…KSGN, IYEG…LTTN, EYTG…FLKR, EYVG…ASGA, and MYEG…KNGR. Residues 758 to 801 are a coiled coil; the sequence is KEKVKENRLHNEAMALQRKMENEELEARLNSLREEEAKRQDYEV. Positions 810–840 are disordered; the sequence is VDAPSSSFTPSPPKEDTVVSSKSITSKKKKK.

Interacts with RSPH6A. Does not appear to be part of the axonemal radial spoke complexes 1 or 2.

It is found in the cytoplasm. The protein resides in the cytoskeleton. It localises to the cilium axoneme. The protein localises to the cell projection. Its subcellular location is the cilium. It is found in the flagellum. Its function is as follows. May function as part of the axonemal radial spoke complex 3 (RS3). Radial spoke complexes are important for ciliary motility. In Bos taurus (Bovine), this protein is Radial spoke head 10 homolog B (RSPH10B).